Here is a 385-residue protein sequence, read N- to C-terminus: S-adenosylmethionine synthase (385 aa).

H15 serves as a coordination point for ATP. D17 serves as a coordination point for Mg(2+). E43 is a binding site for K(+). Positions 56 and 99 each coordinate L-methionine. Positions Q99–R109 are flexible loop. Residues D164–K166, R230–F231, D239, R245–K246, A262, and K266 each bind ATP. Position 239 (D239) interacts with L-methionine. Position 270 (K270) interacts with L-methionine.

Belongs to the AdoMet synthase family. As to quaternary structure, homotetramer; dimer of dimers. The cofactor is Mg(2+). It depends on K(+) as a cofactor.

It localises to the cytoplasm. The catalysed reaction is L-methionine + ATP + H2O = S-adenosyl-L-methionine + phosphate + diphosphate. The protein operates within amino-acid biosynthesis; S-adenosyl-L-methionine biosynthesis; S-adenosyl-L-methionine from L-methionine: step 1/1. Catalyzes the formation of S-adenosylmethionine (AdoMet) from methionine and ATP. The overall synthetic reaction is composed of two sequential steps, AdoMet formation and the subsequent tripolyphosphate hydrolysis which occurs prior to release of AdoMet from the enzyme. The sequence is that of S-adenosylmethionine synthase from Sodalis glossinidius (strain morsitans).